Here is a 95-residue protein sequence, read N- to C-terminus: MRDARDVLKRPVISEKSVGLIEENKYSFWVDTAANKIEIKAAVEKMFKVKVVDVRTINVDGKKKRVGKHVGRTADRKKAIVTLKAGDRIEGFAGL.

This sequence belongs to the universal ribosomal protein uL23 family. As to quaternary structure, part of the 50S ribosomal subunit. Contacts protein L29, and trigger factor when it is bound to the ribosome.

In terms of biological role, one of the early assembly proteins it binds 23S rRNA. One of the proteins that surrounds the polypeptide exit tunnel on the outside of the ribosome. Forms the main docking site for trigger factor binding to the ribosome. The chain is Large ribosomal subunit protein uL23 from Desulfitobacterium hafniense (strain Y51).